The sequence spans 1855 residues: MGLARATAGLGPCCPPAPALLGAGLRWGGFLFAWILVSFSCHLASTQGAPEDVDVLQRLGLSWTKAGGGRSPAPPGVIPFPSGFIFTQRAKLQAPTTNVLPTTLGRELALVLSLCSHRVNHAFLFAIRSRKHRLQLGLQFLPGRTLVHLGPRQSVAFDLDVHDGRWHHLALELRGRTVTLVTACGQHRVPVPLPSRRDSMLDPQGSFLLGKMNPRAVQFEGALCQFSIHPVAQVAHNYCAHLRERCRQVDTYGPQVGALFPWDSGPAFALHPEPALLGLGNLTRNPATLGSRPISRGLMVTMAPAVPTKPLRMVHQDVSKLGSSQTPLVPAKQSARKTPSPFPSAALANSTRVFHSAPAQPRQITATSPTKRPPTKPSVSSLSVTPMKSPQAIQKAGTPSFSRPIPTTQKPTPLTSHPSPSKVSSATVRPVQKTFMTPQPPTLSPQALHPITGLPKKFTIPTVAKPQSKMTSWASKPVLARTNVPKALEQTVVAQSSVSYLGSQTLATALPPLGVGNSRMMPSTRDSTSTPAGSKKITGLEASKKTRHKSSPRKPIPLSSGKTARDASPRDLTTKPSQLSTPALVLAPAHLLSSSPQPTSSSFSFFHLPEPTPFLMLMGPPGSKGDCGLPGPPGLPGLPGSPGPRGPRGPPGPFGNPGLPGPPGAKGQKGDPGLSPGQAHDGAKGNMGLPGLAGNPGPMGRKGHKGHPGAAGHPGEQGQPGPEGSPGAKGYPGRQGFPGPVGDPGPKGSRGYIGLPGLFGLPGSDGERGLPGIPGKRGEMGRPGFPGDFGERGPPGLDGNPGEIGLPGPPGVLGLLGDMGALGPVGYPGPKGMKGLMGGVGEPGLKGDKGEQGVPGVSGDPGFQGDKGSHGLPGFPGARGKPGPMGKAGDKGSLGLPGPPGPEGFPGDIGPPGDNGPEGMKGKPGARGLPGPPGQLGPEGDEGPMGPPGVPGLEGQPGRKGFPGRPGLDGSKGEPGDPGRPGPVGEQGLMGFVGLVGEPGIVGEKGDRGVMGPPGAPGPKGSMGHPGTPGGVGDPGEPGPWGPPGSRGLPGMRGAKGHRGPRGPDGPAGEQGSKGLKGRVGPRGRPGQPGQQGAAGERGHSGAKGFLGIPGPSGPPGAKGLPGEPGSQGPQGPVGPPGEMGPKGPPGAVGEPGLPGDSGMKGDLGPLGPPGEQGLIGQRGEPGLEGDLGPVGPDGLKGDRGDPGPDGEHGEKGQEGLKGEEGLPGPPGITGVRGREGKPGSQGEKGQRGAKGAKGYQGQLGEMGIPGDPGPPGTPGPKGSRGTLGPMGAPGRMGAQGEPGLAGYNGHKGITGPLGPPGPKGEKGEQGEDGKTEGAPGPPGERGPVGDRGDRGEPGDPGYPGQEGVQGLRGEPGQQGQPGHPGPRGRPGPKGSKGEEGPKGKPGKAGASGRRGTQGLQGLPGPRGVVGRQGPEGMAGQDGNPGRDGRPGYQGEQGNDGDPGPVGPAGRRGNPGVAGLPGAQGPPGFKGESGLPGQLGPPGKRGTEGGTGLPGNQGEPGSKGQPGDSGEMGFPGVAGLFGPKGPPGDIGFKGIQGPRGPPGLMGKEGIIGPPGMLGPSGLPGPKGDRGSRGDWGLQGPRGPPGPRGRPGPPGPPWHPVQFQQDDLEAAFQTWMDAHGAVRLEQGYSYPDQLMLDQGGEIFKTLHYLSNLIQSIKTPLGTKENPARVCRDLMDCEQKMADGIYWVDPNLGCSSDTIEVSCNFTHGGQTCLKPITASKAEFAVSRVQMNFLHLLSSEGTQHITIHCLNMTVWQEGPARPSARQAVRFRAWNGQVFEAGGQFRPEVSMDGCKVHDGRWHQTLFTFRTQDPQQLPIVSVDNLPPVSSGKQYRLEVGPACFL.

Residues 1–48 (MGLARATAGLGPCCPPAPALLGAGLRWGGFLFAWILVSFSCHLASTQG) form the signal peptide. A propeptide spans 49–618 (APEDVDVLQR…PEPTPFLMLM (570 aa)) (N-terminal propeptide). In terms of domain architecture, Laminin G-like spans 81 to 246 (PSGFIFTQRA…NYCAHLRERC (166 aa)). N-linked (GlcNAc...) asparagine glycans are attached at residues asparagine 281 and asparagine 349. Disordered regions lie at residues 317-428 (DVSK…SATV), 511-580 (PPLG…SQLS), 617-787 (LMGP…GFPG), and 838-1617 (GGVG…HPVQ). Composition is skewed to polar residues over residues 382–427 (LSVT…SSAT) and 520–532 (MMPSTRDSTSTPA). Residues 563-573 (TARDASPRDLT) show a composition bias toward basic and acidic residues. 13 consecutive Collagen-like domains span residues 619–673 (GPPG…GDPG), 682–741 (GAKG…PGPV), 751–810 (GYIG…PGPP), 826–885 (GYPG…PGPM), 886–945 (GKAG…EGPM), 946–1005 (GPPG…VGEK), 1006–1047 (GDRG…PGSR), 1048–1105 (GLPG…GAKG), 1108–1155 (GIPG…PGLP), 1156–1215 (GDSG…KGQE), 1216–1275 (GLKG…PGTP), 1276–1330 (GPKG…GEDG), and 1334–1393 (GAPG…KGSK). The interval 619–1612 (GPPGSKGDCG…RGRPGPPGPP (994 aa)) is triple-helical region. Over residues 630 to 663 (PGPPGLPGLPGSPGPRGPRGPPGPFGNPGLPGPP) the composition is skewed to pro residues. Residues 708-728 (PGAAGHPGEQGQPGPEGSPGA) show a composition bias toward low complexity. The segment covering 905-918 (FPGDIGPPGDNGPE) has biased composition (low complexity). Positions 1027–1036 (GTPGGVGDPG) are enriched in gly residues. 3 stretches are compositionally biased toward low complexity: residues 1083 to 1095 (RGRPGQPGQQGAA), 1121 to 1131 (LPGEPGSQGPQ), and 1161 to 1176 (KGDLGPLGPPGEQGLI). 3 stretches are compositionally biased toward basic and acidic residues: residues 1196-1221 (LKGDRGDPGPDGEHGEKGQEGLKGEE), 1320-1332 (KGEKGEQGEDGKT), and 1344-1354 (PVGDRGDRGEP). Composition is skewed to low complexity over residues 1369-1378 (RGEPGQQGQP) and 1404-1431 (KAGASGRRGTQGLQGLPGPRGVVGRQGP). Collagen-like domains are found at residues 1433-1492 (GMAG…SGLP), 1493-1552 (GQLG…KGIQ), and 1553-1612 (GPRG…PGPP). A compositionally biased stretch (low complexity) spans 1566–1581 (IIGPPGMLGPSGLPGP). The span at 1597–1614 (RGPPGPRGRPGPPGPPWH) shows a compositional bias: pro residues. Residues 1616-1855 (VQFQQDDLEA…RLEVGPACFL (240 aa)) constitute a propeptide, C-terminal propeptide. One can recognise a Fibrillar collagen NC1 domain in the interval 1655–1855 (GEIFKTLHYL…RLEVGPACFL (201 aa)). 3 disulfides stabilise this stretch: cysteine 1685/cysteine 1717, cysteine 1726/cysteine 1853, and cysteine 1762/cysteine 1806. Positions 1703, 1705, 1708, and 1711 each coordinate Ca(2+). A glycan (N-linked (GlcNAc...) asparagine) is linked at asparagine 1764.

The protein belongs to the fibrillar collagen family.

The protein localises to the secreted. The protein resides in the extracellular space. It localises to the extracellular matrix. Functionally, plays a role during the calcification of cartilage and the transition of cartilage to bone. The protein is Collagen alpha-1(XXVII) chain (Col27a1) of Rattus norvegicus (Rat).